The sequence spans 1078 residues: Carbamoyl phosphate synthase large chain (1078 aa).

The tract at residues 1–401 (MARQPLVSSV…ALQKAVRGLE (401 aa)) is carboxyphosphate synthetic domain. 12 residues coordinate ATP: Arg129, Arg169, Gly175, Gly176, Arg208, Leu210, Glu215, Gly241, Val242, His243, Gln284, and Glu298. One can recognise an ATP-grasp 1 domain in the interval 133–327 (KELLLEIGEP…IARIAAKLAI (195 aa)). 3 residues coordinate Mg(2+): Gln284, Glu298, and Asn300. Residues Gln284, Glu298, and Asn300 each contribute to the Mn(2+) site. The tract at residues 402–546 (TDQTDLTWED…YATYEDENEA (145 aa)) is oligomerization domain. Residues 547-935 (PPLDSPKAVV…ALAKAFLAAG (389 aa)) form a carbamoyl phosphate synthetic domain region. Residues 677 to 867 (ERFLHELGIP…MVDVATQILL (191 aa)) form the ATP-grasp 2 domain. Arg713, Lys752, Leu754, Glu758, Gly783, Val784, His785, Ser786, Gln826, and Glu838 together coordinate ATP. Mg(2+)-binding residues include Gln826, Glu838, and Asn840. Mn(2+)-binding residues include Gln826, Glu838, and Asn840. The 143-residue stretch at 936–1078 (LAIERGAPVL…AYRTREAVLA (143 aa)) folds into the MGS-like domain. Positions 936–1078 (LAIERGAPVL…AYRTREAVLA (143 aa)) are allosteric domain.

This sequence belongs to the CarB family. In terms of assembly, composed of two chains; the small (or glutamine) chain promotes the hydrolysis of glutamine to ammonia, which is used by the large (or ammonia) chain to synthesize carbamoyl phosphate. Tetramer of heterodimers (alpha,beta)4. Requires Mg(2+) as cofactor. It depends on Mn(2+) as a cofactor.

It carries out the reaction hydrogencarbonate + L-glutamine + 2 ATP + H2O = carbamoyl phosphate + L-glutamate + 2 ADP + phosphate + 2 H(+). The enzyme catalyses hydrogencarbonate + NH4(+) + 2 ATP = carbamoyl phosphate + 2 ADP + phosphate + 2 H(+). Its pathway is amino-acid biosynthesis; L-arginine biosynthesis; carbamoyl phosphate from bicarbonate: step 1/1. The protein operates within pyrimidine metabolism; UMP biosynthesis via de novo pathway; (S)-dihydroorotate from bicarbonate: step 1/3. In terms of biological role, large subunit of the glutamine-dependent carbamoyl phosphate synthetase (CPSase). CPSase catalyzes the formation of carbamoyl phosphate from the ammonia moiety of glutamine, carbonate, and phosphate donated by ATP, constituting the first step of 2 biosynthetic pathways, one leading to arginine and/or urea and the other to pyrimidine nucleotides. The large subunit (synthetase) binds the substrates ammonia (free or transferred from glutamine from the small subunit), hydrogencarbonate and ATP and carries out an ATP-coupled ligase reaction, activating hydrogencarbonate by forming carboxy phosphate which reacts with ammonia to form carbamoyl phosphate. The polypeptide is Carbamoyl phosphate synthase large chain (Thermomicrobium roseum (strain ATCC 27502 / DSM 5159 / P-2)).